The chain runs to 627 residues: Carene synthase, chloroplastic (627 aa).

The transit peptide at 1-36 directs the protein to the chloroplast; sequence MSVISIMPLASKPCLNKSFISSTHEPKALRRPISTV. Asp378, Asp382, and Asp530 together coordinate Mg(2+). The DDXXD motif motif lies at 378–382; sequence DDMYD.

Belongs to the terpene synthase family. Tpsd subfamily. It depends on Mg(2+) as a cofactor. The cofactor is Mn(2+).

The protein localises to the plastid. The protein resides in the chloroplast. The catalysed reaction is (2E)-geranyl diphosphate = (+)-car-3-ene + diphosphate. It functions in the pathway terpene metabolism; oleoresin biosynthesis. In terms of biological role, terpene synthase (TPS) involved in defensive oleoresin formation in conifers in response to insect attack or other injury. This Picea glauca (White spruce) protein is Carene synthase, chloroplastic (3CAR).